A 177-amino-acid polypeptide reads, in one-letter code: Acireductone dioxygenase (177 aa).

The Fe(2+) site is built by His-99, His-101, Glu-105, and His-143. Residues His-99, His-101, Glu-105, and His-143 each contribute to the Ni(2+) site.

It belongs to the acireductone dioxygenase (ARD) family. In terms of assembly, monomer. Fe(2+) serves as cofactor. The cofactor is Ni(2+).

It carries out the reaction 1,2-dihydroxy-5-(methylsulfanyl)pent-1-en-3-one + O2 = 3-(methylsulfanyl)propanoate + CO + formate + 2 H(+). It catalyses the reaction 1,2-dihydroxy-5-(methylsulfanyl)pent-1-en-3-one + O2 = 4-methylsulfanyl-2-oxobutanoate + formate + 2 H(+). Its pathway is amino-acid biosynthesis; L-methionine biosynthesis via salvage pathway; L-methionine from S-methyl-5-thio-alpha-D-ribose 1-phosphate: step 5/6. Functionally, catalyzes 2 different reactions between oxygen and the acireductone 1,2-dihydroxy-3-keto-5-methylthiopentene (DHK-MTPene) depending upon the metal bound in the active site. Fe-containing acireductone dioxygenase (Fe-ARD) produces formate and 2-keto-4-methylthiobutyrate (KMTB), the alpha-ketoacid precursor of methionine in the methionine recycle pathway. Ni-containing acireductone dioxygenase (Ni-ARD) produces methylthiopropionate, carbon monoxide and formate, and does not lie on the methionine recycle pathway. The protein is Acireductone dioxygenase of Leptospira interrogans serogroup Icterohaemorrhagiae serovar copenhageni (strain Fiocruz L1-130).